The primary structure comprises 92 residues: Small ribosomal subunit protein uS19 (92 aa).

The protein belongs to the universal ribosomal protein uS19 family.

In terms of biological role, protein S19 forms a complex with S13 that binds strongly to the 16S ribosomal RNA. In Variovorax paradoxus (strain S110), this protein is Small ribosomal subunit protein uS19.